We begin with the raw amino-acid sequence, 472 residues long: Meiotic spindle formation protein mei-1 (472 aa).

Positions 83–161 (HEAMTRQSGS…TQGILPQNSA (79 aa)) are disordered. Ser92 bears the Phosphoserine; by mbk-2 mark. Polar residues-rich tracts occupy residues 134-143 (KSTSSMSTNP) and 150-161 (NPTQGILPQNSA). ATP-binding positions include 233 to 240 (GPPGTGKT) and 351 to 352 (RR).

Belongs to the AAA ATPase family. Katanin p60 subunit A1 subfamily. Homohexamer; ATP hydrolysis initiates a cycle between an open spiral and a closed ring conformation which is probably involved in pulling tubulin dimers out from microtubules. Interacts with mei-2, which may serve as a targeting subunit. Interacts with mel-26, which targets mei-1 for ubiquitin mediated proteolysis. Interacts with phosphatase pph-4.1. Post-translationally, phosphorylated. Phosphorylation by mbk-2 is required for its rapid degradation following meiosis II. Likely dephosphorylated by the PP4 complex composed of catalytic subunit pph-4.1 and regulatory subunit ppfr-1. Polyubiquitination targets the protein for rapid degradation via the ubiquitin system at the end of meiosis. The BTB domain protein mel-26 may serve to specifically target mei-1 for ubiquitination by cul-3 containing complexes. The cul-3 protein is in turn regulated by neddylation by ned-8.

Its subcellular location is the cytoplasm. The protein resides in the cytoskeleton. It localises to the spindle pole. The protein localises to the chromosome. It catalyses the reaction n ATP + n H2O + a microtubule = n ADP + n phosphate + (n+1) alpha/beta tubulin heterodimers.. ATPase activity is stimulated by microtubules, which promote homooligomerization. ATP-dependent microtubule severing is stimulated by interaction with mei-2. Catalytic subunit of a complex which severs microtubules in an ATP-dependent manner. Microtubule severing may promote rapid reorganization of cellular microtubule arrays. Required specifically for meiotic spindle formation in the female germline; the presence of this protein is inimical to the formation of mitotic spindles. In body wall muscles, regulates organization of myosin thick filaments. This is Meiotic spindle formation protein mei-1 from Caenorhabditis elegans.